Here is a 379-residue protein sequence, read N- to C-terminus: RNA-splicing ligase RtcB2 (379 aa).

5 residues coordinate Mn(2+): Asp74, Cys77, His137, His168, and His239. A GMP-binding site is contributed by 136-140 (NHFVE). Residues 239–240 (HN), Ser277, 294–297 (HGAG), and Lys372 each bind GMP. His294 acts as the GMP-histidine intermediate in catalysis.

Belongs to the RtcB family. RtcB2 subfamily. Mn(2+) serves as cofactor.

The catalysed reaction is a 3'-end 3'-phospho-ribonucleotide-RNA + a 5'-end dephospho-ribonucleoside-RNA + GTP = a ribonucleotidyl-ribonucleotide-RNA + GMP + diphosphate. In terms of biological role, GTP-dependent RNA ligase involved in rRNA repair. Repairs damaged 16S rRNA in 30S subunits that has been cleaved between adenine-1493 and guanosine-1494 (E.coli nubering). This specific cleavage is inflicted by CdiA (ECL_04451) or by colicin E3-type (ColE3) proteins. Poorly repairs damaged rRNA in the 70S ribosome; addition of release factor PrfH improves repair about 3-fold in vitro, probably because PrfH hydrolyzes the nascent chain allowing ribosomal subunit dissociation. In vivo the PrfH-RtcB2 pair restores growth in the presence of ribotoxins that specifically create this damage. Does not repair damaged tRNA (tested with tRNA(Asp) and tRNA(Arg)). This is RNA-splicing ligase RtcB2 from Escherichia coli (strain ATCC 25922 / DSM 1103 / LMG 8223 / NCIMB 12210 / NCTC 12241 / WDCM 00013 / Seattle 1946).